Consider the following 471-residue polypeptide: 5-hydroxytryptamine receptor 2A (471 aa).

Residues 1–80 lie on the Extracellular side of the membrane; the sequence is MEILCEDNIS…LQEKNWSALL (80 aa). N-linked (GlcNAc...) asparagine glycans are attached at residues N8, N38, N44, N51, and N54. A helical transmembrane segment spans residues 81–97; that stretch reads TTVVIILTIAGNILVIM. Residues 98-111 lie on the Cytoplasmic side of the membrane; the sequence is AVSLEKKLQNATNY. Residues 112–137 traverse the membrane as a helical segment; it reads FLMSLAIADMLLGFLVMPVSMLTILY. Residues 138–146 are Extracellular-facing; sequence GYRWPLPSK. A helical membrane pass occupies residues 147–171; sequence LCAIWIYLDVLFSTASIMHLCAISL. C148 and C227 are disulfide-bonded. D155 serves as a coordination point for serotonin. The short motif at 172–174 is the DRY motif; important for ligand-induced conformation changes element; the sequence is DRY. Over 172–191 the chain is Cytoplasmic; it reads DRYVAIQNPIHHSRFNSRTK. Residues 192–215 form a helical membrane-spanning segment; it reads AFLKIIAVWTISVGISMPIPVFGL. At 216–232 the chain is on the extracellular side; it reads QDDSKVFKEGSCLLADD. A helical membrane pass occupies residues 233–258; the sequence is NFVLIGSFVAFFIPLTIMVITYFLTI. The Cytoplasmic portion of the chain corresponds to 259 to 322; that stretch reads KSLQKEATLC…QSISNEQKAC (64 aa). Residue S280 is modified to Phosphoserine. Residues 323-348 traverse the membrane as a helical segment; that stretch reads KVLGIVFFLFVVMWCPFFITNIMAVI. A serotonin-binding site is contributed by N343. Cysteines 349 and 353 form a disulfide. Topologically, residues 349-356 are extracellular; it reads CKESCNEN. A helical transmembrane segment spans residues 357–382; it reads VIGALLNVFVWIGYLSSAVNPLVYTL. The short motif at 376-380 is the NPxxY motif; important for ligand-induced conformation changes and signaling element; that stretch reads NPLVY. Residues 383–471 are Cytoplasmic-facing; that stretch reads FNKTYRSAFS…ETVNEKVSCV (89 aa). A PDZ-binding motif is present at residues 469–471; that stretch reads SCV.

It belongs to the G-protein coupled receptor 1 family. In terms of assembly, interacts (via C-terminus) with MPDZ and PATJ. May interact (via C-terminus) with MPP3, PRDX6, DLG4, DLG1, CASK, APBA1 and MAGI2. Interacts with GRM2 and DRD2; this may affect signaling. Detected in adult intestine, especially in mucosal epithelium, longitudinal and circular layers of muscularis externa and myenteric plexuses. Highly expressed in Paneth cells, and detected at lower levels in enterocytes (at protein level). Detected in brain cortex.

It localises to the cell membrane. The protein resides in the cell projection. The protein localises to the axon. Its subcellular location is the cytoplasmic vesicle. It is found in the membrane. It localises to the caveola. The protein resides in the dendrite. The protein localises to the presynapse. Its activity is regulated as follows. G-protein coupled receptor activity is regulated by lipids: oleamide increases HTR2A-mediated activity. In terms of biological role, G-protein coupled receptor for 5-hydroxytryptamine (serotonin). Also functions as a receptor for various drugs and psychoactive substances, including mescaline, psilocybin, 1-(2,5-dimethoxy-4-iodophenyl)-2-aminopropane (DOI) and lysergic acid diethylamide (LSD). Ligand binding causes a conformation change that triggers signaling via guanine nucleotide-binding proteins (G proteins) and modulates the activity of downstream effectors. HTR2A is coupled to G(q)/G(11) G alpha proteins and activates phospholipase C-beta, releasing diacylglycerol (DAG) and inositol 1,4,5-trisphosphate (IP3) second messengers that modulate the activity of phosphatidylinositol 3-kinase and promote the release of Ca(2+) ions from intracellular stores, respectively. Beta-arrestin family members inhibit signaling via G proteins and mediate activation of alternative signaling pathways. Affects neural activity, perception, cognition and mood. Plays a role in the regulation of behavior, including responses to anxiogenic situations and psychoactive substances. Plays a role in intestinal smooth muscle contraction, and may play a role in arterial vasoconstriction. The protein is 5-hydroxytryptamine receptor 2A (Htr2a) of Rattus norvegicus (Rat).